We begin with the raw amino-acid sequence, 661 residues long: Putative DUF21 domain-containing protein At3g13070, chloroplastic (661 aa).

A chloroplast-targeting transit peptide spans 1–71 (MMGMALELSV…RSCEFSYRSR (71 aa)). Transmembrane regions (helical) follow at residues 105–125 (GIVI…KVLA), 162–182 (GLIL…ETSI), 213–233 (FLTT…ALVT), 239–259 (IFGE…ILLL), and 285–305 (WLSL…MGIL). The 187-residue stretch at 154-340 (VLTVLREQGL…ELSGAIEEEE (187 aa)) folds into the CNNM transmembrane domain. CBS domains lie at 359-420 (MTPL…LLES) and 426-484 (MAHK…IFDE). 2 disordered regions span residues 559 to 578 (ESWE…QEPK) and 628 to 661 (SSEE…KKQQ). 2 stretches are compositionally biased toward acidic residues: residues 560–570 (SWEEDGEEEEG) and 630–643 (EEDD…EDQS). Over residues 648–661 (LDEHVLADNSKKQQ) the composition is skewed to basic and acidic residues.

It localises to the plastid. It is found in the chloroplast membrane. The polypeptide is Putative DUF21 domain-containing protein At3g13070, chloroplastic (CBSDUFCH1) (Arabidopsis thaliana (Mouse-ear cress)).